We begin with the raw amino-acid sequence, 309 residues long: 5-formyl-3-hydroxy-2-methylpyridine 4-carboxylate 5-dehydrogenase (309 aa).

Residues 12–13 (TM), Asp32, 87–89 (VPE), and Lys94 each bind NAD(+).

Belongs to the 3-hydroxyacyl-CoA dehydrogenase family. Homodimer.

It carries out the reaction 5-formyl-3-hydroxy-2-methylpyridine-4-carboxylate + NAD(+) + H2O = 5-hydroxy-6-methylpyridine-3,4-dicarboxylate + NADH + 2 H(+). It catalyses the reaction 5-formyl-3-hydroxy-2-methylpyridine-4-carboxylate + NADH + H(+) = 4-pyridoxate + NAD(+). The protein operates within cofactor degradation; B6 vitamer degradation. Involved in the degradation of pyridoxine (vitamin B(6)). Catalyzes the oxidation of 5-formyl-3-hydroxy-2-methylpyridine-4-carboxylate (FHMPC) by NAD(+) to 5-hydroxy-6-methylpyridine-3,4-dicarboxylate (HMPDC). Can also catalyze the reduction of FHMPC by NADH to 4-pyridoxic acid. The polypeptide is 5-formyl-3-hydroxy-2-methylpyridine 4-carboxylate 5-dehydrogenase (Mesorhizobium japonicum (strain LMG 29417 / CECT 9101 / MAFF 303099) (Mesorhizobium loti (strain MAFF 303099))).